A 241-amino-acid polypeptide reads, in one-letter code: MSGHSKWNNIQGRKNAQDSKRSKVFQKLAREIFVAAKKGPDPNLNPSLRLVMDKAKAVNMPNDNIKRAIDKAAGNTSGENYDEVTYEGYAPGGIAVLVHALTDNKNRTSTNVRVAFNKNGGSLGETGSVSYMFDRKGYLVILREGLDVDEEEFMLEAIEAGADDVEVSEDVFEIFTDPATFPEVKEALQEAGYTFATAELSMFPTVYNEVAENNQTQFDKMLEALEDDDDVQEVYTNAEIN.

The segment covering 1-14 (MSGHSKWNNIQGRK) has biased composition (polar residues). Residues 1-22 (MSGHSKWNNIQGRKNAQDSKRS) are disordered.

It belongs to the TACO1 family.

It is found in the cytoplasm. The polypeptide is Probable transcriptional regulatory protein LMOf2365_1554 (Listeria monocytogenes serotype 4b (strain F2365)).